A 265-amino-acid chain; its full sequence is Energy-coupling factor transporter transmembrane protein EcfT (265 aa).

The next 6 membrane-spanning stretches (helical) occupy residues 29-49, 63-83, 94-114, 117-137, 143-163, and 243-263; these read VMAFIAIVFLANNWLTYALMF, FLFFIKGLQPIFWLILITLLL, LVDLGLLQITTLGLANGAMMF, FVLIIFMTTLLTLTTSPIELT, ILAPFRLVHLPVHELALMLSI, and RFADTCLLISLAVLSGLLFWL.

It belongs to the energy-coupling factor EcfT family. In terms of assembly, forms a stable energy-coupling factor (ECF) transporter complex composed of 2 membrane-embedded substrate-binding proteins (S component), 2 ATP-binding proteins (A component) and 2 transmembrane proteins (T component). May be able to interact with more than 1 S component at a time.

The protein resides in the cell membrane. Its function is as follows. Transmembrane (T) component of an energy-coupling factor (ECF) ABC-transporter complex. Unlike classic ABC transporters this ECF transporter provides the energy necessary to transport a number of different substrates. The sequence is that of Energy-coupling factor transporter transmembrane protein EcfT from Listeria innocua serovar 6a (strain ATCC BAA-680 / CLIP 11262).